Reading from the N-terminus, the 281-residue chain is Aminoglycoside N(3)-acetyltransferase IX (281 aa).

It belongs to the antibiotic N-acetyltransferase family.

The catalysed reaction is a 2-deoxystreptamine antibiotic + acetyl-CoA = an N(3)-acetyl-2-deoxystreptamine antibiotic + CoA + H(+). In terms of biological role, resistance to neomycin. The sequence is that of Aminoglycoside N(3)-acetyltransferase IX (aacC9) from Micromonospora chalcea.